Reading from the N-terminus, the 629-residue chain is tRNA uridine 5-carboxymethylaminomethyl modification enzyme MnmG (629 aa).

Residues 15 to 20, valine 127, and serine 182 contribute to the FAD site; that span reads GAGHAG. The disordered stretch occupies residues 203 to 226; sequence TPPRVKSSTIDYSKTEEQPGDDHP. Over residues 215–226 the composition is skewed to basic and acidic residues; that stretch reads SKTEEQPGDDHP. 274-288 contacts NAD(+); that stretch reads GARYCPSIEDKIVRF. Glutamine 371 is an FAD binding site.

Belongs to the MnmG family. Homodimer. Heterotetramer of two MnmE and two MnmG subunits. FAD is required as a cofactor.

It localises to the cytoplasm. NAD-binding protein involved in the addition of a carboxymethylaminomethyl (cmnm) group at the wobble position (U34) of certain tRNAs, forming tRNA-cmnm(5)s(2)U34. This is tRNA uridine 5-carboxymethylaminomethyl modification enzyme MnmG from Listeria monocytogenes serovar 1/2a (strain ATCC BAA-679 / EGD-e).